The primary structure comprises 402 residues: Phosphoglycerate kinase (402 aa).

Residues 21–23 (DLN), Arg-36, 59–62 (HLGR), Arg-114, and Arg-147 contribute to the substrate site. Residues Lys-202, Glu-329, and 355 to 358 (GGDT) each bind ATP.

This sequence belongs to the phosphoglycerate kinase family. As to quaternary structure, monomer.

It is found in the cytoplasm. It catalyses the reaction (2R)-3-phosphoglycerate + ATP = (2R)-3-phospho-glyceroyl phosphate + ADP. It functions in the pathway carbohydrate degradation; glycolysis; pyruvate from D-glyceraldehyde 3-phosphate: step 2/5. The protein is Phosphoglycerate kinase of Psychrobacter sp. (strain PRwf-1).